The sequence spans 176 residues: UPF0262 protein GbCGDNIH1_1393 (176 aa).

Belongs to the UPF0262 family.

The protein is UPF0262 protein GbCGDNIH1_1393 of Granulibacter bethesdensis (strain ATCC BAA-1260 / CGDNIH1).